Here is a 120-residue protein sequence, read N- to C-terminus: Large ribosomal subunit protein uL18 (120 aa).

This sequence belongs to the universal ribosomal protein uL18 family. Part of the 50S ribosomal subunit; part of the 5S rRNA/L5/L18/L25 subcomplex. Contacts the 5S and 23S rRNAs.

Its function is as follows. This is one of the proteins that bind and probably mediate the attachment of the 5S RNA into the large ribosomal subunit, where it forms part of the central protuberance. In Nitrobacter winogradskyi (strain ATCC 25391 / DSM 10237 / CIP 104748 / NCIMB 11846 / Nb-255), this protein is Large ribosomal subunit protein uL18.